Here is a 459-residue protein sequence, read N- to C-terminus: MNRLPSSASALACSAHALNLIEKRTLDHEEMKALNREVIEYFKEHVNPGFLEYRKSVTAGGDYGAVEWQAGGLNTLVDTQGQEFIDCLGGFGIFNVGHRNPVVVSAVQNQLAKQPLHSQELLDPLRAMLAKTLAALTPGKLKYSFFCNSGTESVEAALKLAKAYQSPRGKFTFIATSGAFHGKSLGALSATAKSTFRKPFMPLLPGFRHVPFGNIEAMRTALSECKKTGDDVAAVILEPIQGEGGVILPPPGYLTAVRKLCDEFGALMILDEVQTGMGRTGKMFACEHENVQPDILCLAKALGGGVMPIGATIATEEVFSVLFDNPFLHTTTFGGNPLACAAALATINVLLEQNLPAQAEQKGDMLLDGFRQLAREYPDLVQEARGKGMLMAIEFVDNEIGYNFASEMFRQRVLVAGTLNNAKTIRIEPPLTLTIEQCELVIKAARKALAAMRVSVEEA.

Residues 150 to 151 and Gln274 each bind pyridoxal 5'-phosphate; that span reads GT. Position 300 is an N6-(pyridoxal phosphate)lysine (Lys300). Thr332 provides a ligand contact to pyridoxal 5'-phosphate.

Belongs to the class-III pyridoxal-phosphate-dependent aminotransferase family. Putrescine aminotransferase subfamily. Pyridoxal 5'-phosphate is required as a cofactor.

It carries out the reaction an alkane-alpha,omega-diamine + 2-oxoglutarate = an omega-aminoaldehyde + L-glutamate. The enzyme catalyses putrescine + 2-oxoglutarate = 1-pyrroline + L-glutamate + H2O. The catalysed reaction is cadaverine + 2-oxoglutarate = 5-aminopentanal + L-glutamate. It functions in the pathway amine and polyamine degradation; putrescine degradation; 4-aminobutanal from putrescine (transaminase route): step 1/1. Catalyzes the aminotransferase reaction from putrescine to 2-oxoglutarate, leading to glutamate and 4-aminobutanal, which spontaneously cyclizes to form 1-pyrroline. This is the first step in one of two pathways for putrescine degradation, where putrescine is converted into 4-aminobutanoate (gamma-aminobutyrate or GABA) via 4-aminobutanal. Also functions as a cadaverine transaminase in a a L-lysine degradation pathway to succinate that proceeds via cadaverine, glutarate and L-2-hydroxyglutarate. The chain is Putrescine aminotransferase from Escherichia coli O17:K52:H18 (strain UMN026 / ExPEC).